A 226-amino-acid chain; its full sequence is ATP synthase F(0) complex subunit a (226 aa).

The next 6 membrane-spanning stretches (helical) occupy residues 6 to 26, 68 to 88, 97 to 117, 138 to 158, 164 to 184, and 193 to 213; these read FATF…IMLF, WALM…LGLL, QLSM…LMGF, VPML…ALAV, ITAG…LCSI, and FIIL…QAYV.

The protein belongs to the ATPase A chain family. Component of the ATP synthase complex composed at least of ATP5F1A/subunit alpha, ATP5F1B/subunit beta, ATP5MC1/subunit c (homooctomer), MT-ATP6/subunit a, MT-ATP8/subunit 8, ATP5ME/subunit e, ATP5MF/subunit f, ATP5MG/subunit g, ATP5MK/subunit k, ATP5MJ/subunit j, ATP5F1C/subunit gamma, ATP5F1D/subunit delta, ATP5F1E/subunit epsilon, ATP5PF/subunit F6, ATP5PB/subunit b, ATP5PD/subunit d, ATP5PO/subunit OSCP. ATP synthase complex consists of a soluble F(1) head domain (subunits alpha(3) and beta(3)) - the catalytic core - and a membrane F(0) domain - the membrane proton channel (subunits c, a, 8, e, f, g, k and j). These two domains are linked by a central stalk (subunits gamma, delta, and epsilon) rotating inside the F1 region and a stationary peripheral stalk (subunits F6, b, d, and OSCP). Interacts with DNAJC30; interaction is direct.

Its subcellular location is the mitochondrion inner membrane. The catalysed reaction is H(+)(in) = H(+)(out). Subunit a, of the mitochondrial membrane ATP synthase complex (F(1)F(0) ATP synthase or Complex V) that produces ATP from ADP in the presence of a proton gradient across the membrane which is generated by electron transport complexes of the respiratory chain. ATP synthase complex consist of a soluble F(1) head domain - the catalytic core - and a membrane F(1) domain - the membrane proton channel. These two domains are linked by a central stalk rotating inside the F(1) region and a stationary peripheral stalk. During catalysis, ATP synthesis in the catalytic domain of F(1) is coupled via a rotary mechanism of the central stalk subunits to proton translocation. With the subunit c (ATP5MC1), forms the proton-conducting channel in the F(0) domain, that contains two crucial half-channels (inlet and outlet) that facilitate proton movement from the mitochondrial intermembrane space (IMS) into the matrix. Protons are taken up via the inlet half-channel and released through the outlet half-channel, following a Grotthuss mechanism. The protein is ATP synthase F(0) complex subunit a of Osphranter robustus (Wallaroo).